Here is a 137-residue protein sequence, read N- to C-terminus: Probable 4-amino-4-deoxy-L-arabinose-phosphoundecaprenol flippase subunit ArnF (137 aa).

Over 1 to 5 the chain is Cytoplasmic; that stretch reads MNVPR. The chain crosses the membrane as a helical span at residues 6–26; the sequence is GWLAALGSVLLVSAAQLGMRW. Topologically, residues 27-44 are periplasmic; the sequence is GMSRLPLPEAWAGQTPEH. Residues 45 to 65 form a helical membrane-spanning segment; the sequence is AALLAVALAVAAYAASLLCWL. Residues 66–76 are Cytoplasmic-facing; sequence AALRHLPLGRA. A helical membrane pass occupies residues 77-97; the sequence is YSLLSASYALVYLLAASLPAF. Residues 98–100 are Periplasmic-facing; that stretch reads EET. A helical membrane pass occupies residues 101–121; that stretch reads FTTGKTLGVGLVVLGVLTVNA. Residues 122–137 lie on the Cytoplasmic side of the membrane; the sequence is RRTAAAPAHHPSRKAL.

The protein belongs to the ArnF family. Heterodimer of ArnE and ArnF.

It localises to the cell inner membrane. It functions in the pathway bacterial outer membrane biogenesis; lipopolysaccharide biosynthesis. In terms of biological role, translocates 4-amino-4-deoxy-L-arabinose-phosphoundecaprenol (alpha-L-Ara4N-phosphoundecaprenol) from the cytoplasmic to the periplasmic side of the inner membrane. The chain is Probable 4-amino-4-deoxy-L-arabinose-phosphoundecaprenol flippase subunit ArnF from Pseudomonas paraeruginosa (strain DSM 24068 / PA7) (Pseudomonas aeruginosa (strain PA7)).